The primary structure comprises 93 residues: Small ribosomal subunit protein uS15 (93 aa).

Belongs to the universal ribosomal protein uS15 family. Part of the 30S ribosomal subunit. Forms a bridge to the 50S subunit in the 70S ribosome, contacting the 23S rRNA.

In terms of biological role, one of the primary rRNA binding proteins, it binds directly to 16S rRNA where it helps nucleate assembly of the platform of the 30S subunit by binding and bridging several RNA helices of the 16S rRNA. Its function is as follows. Forms an intersubunit bridge (bridge B4) with the 23S rRNA of the 50S subunit in the ribosome. The chain is Small ribosomal subunit protein uS15 from Ehrlichia chaffeensis (strain ATCC CRL-10679 / Arkansas).